We begin with the raw amino-acid sequence, 319 residues long: Phosphoenolpyruvate transferase (319 aa).

D50 serves as a coordination point for 7,8-didemethyl-8-hydroxy-5-deazariboflavin.

Belongs to the CofD family. Homodimer. The cofactor is Mg(2+).

It carries out the reaction enolpyruvoyl-2-diphospho-5'-guanosine + 7,8-didemethyl-8-hydroxy-5-deazariboflavin = dehydro coenzyme F420-0 + GMP + H(+). It participates in cofactor biosynthesis; coenzyme F420 biosynthesis. In terms of biological role, catalyzes the transfer of the phosphoenolpyruvate moiety from enoylpyruvoyl-2-diphospho-5'-guanosine (EPPG) to 7,8-didemethyl-8-hydroxy-5-deazariboflavin (FO) with the formation of dehydro coenzyme F420-0 and GMP. The polypeptide is Phosphoenolpyruvate transferase (Streptomyces avermitilis (strain ATCC 31267 / DSM 46492 / JCM 5070 / NBRC 14893 / NCIMB 12804 / NRRL 8165 / MA-4680)).